A 456-amino-acid chain; its full sequence is Glutamate--tRNA ligase 1 (456 aa).

Positions 9–19 match the 'HIGH' region motif; it reads PSPTGQIHIGN. Positions 250–254 match the 'KMSKS' region motif; it reads GLSKR. Lys253 contacts ATP.

This sequence belongs to the class-I aminoacyl-tRNA synthetase family. Glutamate--tRNA ligase type 1 subfamily. Monomer.

It localises to the cytoplasm. It catalyses the reaction tRNA(Glu) + L-glutamate + ATP = L-glutamyl-tRNA(Glu) + AMP + diphosphate. Functionally, catalyzes the attachment of glutamate to tRNA(Glu) in a two-step reaction: glutamate is first activated by ATP to form Glu-AMP and then transferred to the acceptor end of tRNA(Glu). This Chelativorans sp. (strain BNC1) protein is Glutamate--tRNA ligase 1.